The primary structure comprises 256 residues: Hydroxyacylglutathione hydrolase (256 aa).

Residues H57, H59, D61, H62, H115, D134, and H172 each contribute to the Zn(2+) site.

This sequence belongs to the metallo-beta-lactamase superfamily. Glyoxalase II family. In terms of assembly, monomer. Zn(2+) serves as cofactor.

It catalyses the reaction an S-(2-hydroxyacyl)glutathione + H2O = a 2-hydroxy carboxylate + glutathione + H(+). The protein operates within secondary metabolite metabolism; methylglyoxal degradation; (R)-lactate from methylglyoxal: step 2/2. Its function is as follows. Thiolesterase that catalyzes the hydrolysis of S-D-lactoyl-glutathione to form glutathione and D-lactic acid. The protein is Hydroxyacylglutathione hydrolase of Rhizobium meliloti (strain 1021) (Ensifer meliloti).